Reading from the N-terminus, the 519-residue chain is Spermatocyte protein spe-8 (519 aa).

Disordered regions lie at residues 1 to 39 (MSGV…NPNV) and 73 to 97 (NNLK…KQRD). Residues 73 to 84 (NNLKKSASFDSK) show a composition bias toward polar residues. Positions 85 to 97 (NQPEDSKTPKQRD) are enriched in basic and acidic residues. Residues 119–208 (FYHGFMGRTE…PFYDNMTLIC (90 aa)) form the SH2 domain. ATP contacts are provided by residues 146–154 (VGRRVAYVI) and Lys-184. Positions 209–490 (GLARHEWQLN…KEEAGMHELD (282 aa)) constitute a Protein kinase domain. Asp-349 serves as the catalytic Proton acceptor.

It belongs to the protein kinase superfamily. Tyr protein kinase family. Fes/fps subfamily. Expressed in hermaphrodite larvae but not in adult. Expressed in both male larvae and adult.

It localises to the cell membrane. Its subcellular location is the cytoplasm. The enzyme catalyses L-tyrosyl-[protein] + ATP = O-phospho-L-tyrosyl-[protein] + ADP + H(+). Functionally, probable non-receptor tyrosine-protein kinase which plays a role in spermatid activation (spermiogenesis) in hermaphrodites. This Caenorhabditis briggsae protein is Spermatocyte protein spe-8.